Consider the following 272-residue polypeptide: MAPITQETVDGLKDIIHKLESRVADLESRLVHGSPASNSKSLAEQFRIILIGPPGAGKGTQAPRLKEKYCVCHLATGDMLRSQVAKKTPLGKEAKKIMDQGGLVSDEIMVNMIKSELETNSECKNGFILDGFPRTVAQAERLDDMLSARNEKLQHAVELQIDDALLVARITGRLVHPASGRSYHKIFNPPKQDMKDDITGEPLIQRSDDNAATLEKRLATYHAQTSPVVDYYKKTGIWCGIDASQEPGQVWKSLLGVFQPSSSILSKVGLSK.

55–60 (GAGKGT) serves as a coordination point for ATP. Residues 75 to 104 (ATGDMLRSQVAKKTPLGKEAKKIMDQGGLV) form an NMP region. Residues threonine 76, arginine 81, 102–104 (GLV), 131–134 (GFPR), and glutamine 138 each bind AMP. Residues 172-209 (GRLVHPASGRSYHKIFNPPKQDMKDDITGEPLIQRSDD) are LID. ATP is bound by residues arginine 173 and 182–183 (SY). Positions 206 and 217 each coordinate AMP. Glutamine 245 is a binding site for ATP.

Belongs to the adenylate kinase family. AK2 subfamily. In terms of assembly, monomer.

The protein resides in the cytoplasm. Its subcellular location is the cytosol. It is found in the mitochondrion intermembrane space. It catalyses the reaction AMP + ATP = 2 ADP. Its function is as follows. Catalyzes the reversible transfer of the terminal phosphate group between ATP and AMP. Plays an important role in cellular energy homeostasis and in adenine nucleotide metabolism. Adenylate kinase activity is critical for regulation of the phosphate utilization and the AMP de novo biosynthesis pathways. The chain is Adenylate kinase (adk1) from Talaromyces marneffei (Penicillium marneffei).